The sequence spans 905 residues: Protein translocase subunit SecA (905 aa).

Residues Gln89, 107-111, and Asp502 each bind ATP; that span reads GEGKT. Positions 837–885 are disordered; it reads EQTDVGDPILNDQNKKNSSTLWTPSQENKFVNPKDRNPSDSTTWGKVGR. A compositionally biased stretch (polar residues) spans 852–865; the sequence is KNSSTLWTPSQENK. The Zn(2+) site is built by Cys889, Cys891, Cys900, and His901.

It belongs to the SecA family. Monomer and homodimer. Part of the essential Sec protein translocation apparatus which comprises SecA, SecYEG and auxiliary proteins SecDF-YajC and YidC. Zn(2+) serves as cofactor.

The protein localises to the cell inner membrane. The protein resides in the cytoplasm. It catalyses the reaction ATP + H2O + cellular proteinSide 1 = ADP + phosphate + cellular proteinSide 2.. Its function is as follows. Part of the Sec protein translocase complex. Interacts with the SecYEG preprotein conducting channel. Has a central role in coupling the hydrolysis of ATP to the transfer of proteins into and across the cell membrane, serving both as a receptor for the preprotein-SecB complex and as an ATP-driven molecular motor driving the stepwise translocation of polypeptide chains across the membrane. The polypeptide is Protein translocase subunit SecA (Bartonella henselae (strain ATCC 49882 / DSM 28221 / CCUG 30454 / Houston 1) (Rochalimaea henselae)).